The sequence spans 228 residues: Endo-1,4-beta-xylanase B (228 aa).

The signal sequence occupies residues 1–19 (MVSFTYLLAAVSAVTGAVA). Positions 37–227 (KRTSPTTGVN…SSGQATMTVS (191 aa)) constitute a GH11 domain. Residue E122 is the Nucleophile of the active site. Catalysis depends on E214, which acts as the Proton donor.

Belongs to the glycosyl hydrolase 11 (cellulase G) family.

Its subcellular location is the secreted. The catalysed reaction is Endohydrolysis of (1-&gt;4)-beta-D-xylosidic linkages in xylans.. It participates in glycan degradation; xylan degradation. With respect to regulation, inhibited by the proteinaceous endoxylanase inhibitor I from T.aestivum (TAXI-I). Its function is as follows. Endo-1,4-beta-xylanase involved in the hydrolysis of xylan, a major structural heterogeneous polysaccharide found in plant biomass representing the second most abundant polysaccharide in the biosphere, after cellulose. Plays an important role in causing fusarium head blight (FHB) on cereal crops. Induces cell death and hydrogen peroxide accumulation in infected wheat leaves. This chain is Endo-1,4-beta-xylanase B (XYLB), found in Gibberella zeae (strain ATCC MYA-4620 / CBS 123657 / FGSC 9075 / NRRL 31084 / PH-1) (Wheat head blight fungus).